The chain runs to 256 residues: MNNSKVIKLQDRVPKLKNQKKKNKKNVNHRLILYISILFLLVLFLIYFRSPLSNIKKISVFGNHYMTDEQVMKDSGVTYDTSYFRVTAHKAEENLTKRKEIKAVNVKKRFPNNIDIHIEEYLTIGYINKEGKLQPLLENGKTLDVLPNGKLPVAAPIFEPFKEEKMKELIAELEKLTPAILKSISEIRYSPTNANEDHLTLYMNEGYEVSTTIQNFAKRMEAYPLILKTIEPGKKVLIDLEVGAYTKELGAEEKKE.

The Cytoplasmic segment spans residues 1–30 (MNNSKVIKLQDRVPKLKNQKKKNKKNVNHR). Residues 31 to 51 (LILYISILFLLVLFLIYFRSP) form a helical membrane-spanning segment. The Extracellular portion of the chain corresponds to 52–256 (LSNIKKISVF…KELGAEEKKE (205 aa)). One can recognise a POTRA domain in the interval 53 to 121 (SNIKKISVFG…NNIDIHIEEY (69 aa)).

It belongs to the FtsQ/DivIB family. DivIB subfamily.

It localises to the cell membrane. Cell division protein that may be involved in stabilizing or promoting the assembly of the division complex. This is Cell division protein DivIB from Bacillus cereus (strain ATCC 14579 / DSM 31 / CCUG 7414 / JCM 2152 / NBRC 15305 / NCIMB 9373 / NCTC 2599 / NRRL B-3711).